Reading from the N-terminus, the 356-residue chain is MKRDLLLTKIEEYKNIMPWYVLDYYQSKLSVPYSFTTLYEYLKEYKRFFEWLIDSDLSKAARIADVDLTTLEHLSKKDMEAFILYLRERPSLNTYSTKKGVSQTTINRTLSALSSLYKYLTEEVENEHGEPYFYRNVMKKVATKKKRETLAARAENIKQKLFLGDETMAFLDYVDKEYEYKLSNRAKASFRKNKERDLAIIALLLASGIRLSEAVNLDLKDVNLNMMLVEVTRKGGKRDSVNVAAFAKPHLEAYLSVRKDRYQAEKQDVAFFLTAYRGLPNRIDASSIEKMVGKYSESFKIRVTPHKLRHTLATRLYDTTKSQVLVSHQLGHASTQVTDLYTHIVNDEQKNALDKL.

The region spanning I16–T121 is the Core-binding (CB) domain. In terms of domain architecture, Tyr recombinase spans A169–D354. Residues R210, K234, H306, R309, and H332 contribute to the active site. Residue Y341 is the O-(3'-phospho-DNA)-tyrosine intermediate of the active site.

It belongs to the 'phage' integrase family. XerS subfamily.

The protein resides in the cytoplasm. FtsK is required for recombination. Site-specific tyrosine recombinase, which acts by catalyzing the cutting and rejoining of the recombining DNA molecules. Essential to convert dimers of the bacterial chromosome into monomers to permit their segregation at cell division. This chain is Tyrosine recombinase XerS, found in Streptococcus equi subsp. zooepidemicus (strain MGCS10565).